We begin with the raw amino-acid sequence, 267 residues long: MEIKVLAKRKVSAKRANEILGKFILERKANEENRLFLSGNATPTEDLFQIVSNSLNKFQNHLNESINPELALTENNNNNNTTNGDSSDEALIPMSDDQPNPLKDSSNTLQIDDGDVSERYSDSVSSSTTTTIITNNKKINNNNNNKSKDIDSSNSTESENEKSVQKSKKEKESPKKLTKSKKSKKQESSDESSSESSSSSSSSSSSESSSSESESSSSSEDEKKKKKKKSSSTSSKKSSSKKRKVESSDDSDSSSSEEEKKKKKKKK.

Residues Leu72 to Lys267 form a disordered region. Residues Asp122 to Asn145 show a composition bias toward low complexity. Basic and acidic residues predominate over residues Glu159–Lys175. The segment covering Ser194 to Ser218 has biased composition (low complexity).

This is an uncharacterized protein from Dictyostelium discoideum (Social amoeba).